Consider the following 466-residue polypeptide: Argininosuccinate lyase 1 (466 aa).

The protein belongs to the lyase 1 family. Argininosuccinate lyase subfamily.

It localises to the cytoplasm. The catalysed reaction is 2-(N(omega)-L-arginino)succinate = fumarate + L-arginine. Its pathway is amino-acid biosynthesis; L-arginine biosynthesis; L-arginine from L-ornithine and carbamoyl phosphate: step 3/3. The sequence is that of Argininosuccinate lyase 1 from Agrobacterium fabrum (strain C58 / ATCC 33970) (Agrobacterium tumefaciens (strain C58)).